Here is a 344-residue protein sequence, read N- to C-terminus: Anthranilate phosphoribosyltransferase (344 aa).

Residues Gly-80, 83-84 (GD), Thr-88, 90-93 (NIST), 108-116 (KHGNRSISS), and Ser-120 each bind 5-phospho-alpha-D-ribose 1-diphosphate. Gly-80 is a binding site for anthranilate. Mg(2+) is bound at residue Ser-92. Asn-111 contributes to the anthranilate binding site. Arg-166 provides a ligand contact to anthranilate. Residues Asp-229 and Glu-230 each contribute to the Mg(2+) site.

It belongs to the anthranilate phosphoribosyltransferase family. As to quaternary structure, homodimer. It depends on Mg(2+) as a cofactor.

The enzyme catalyses N-(5-phospho-beta-D-ribosyl)anthranilate + diphosphate = 5-phospho-alpha-D-ribose 1-diphosphate + anthranilate. The protein operates within amino-acid biosynthesis; L-tryptophan biosynthesis; L-tryptophan from chorismate: step 2/5. Functionally, catalyzes the transfer of the phosphoribosyl group of 5-phosphorylribose-1-pyrophosphate (PRPP) to anthranilate to yield N-(5'-phosphoribosyl)-anthranilate (PRA). The sequence is that of Anthranilate phosphoribosyltransferase from Chloroherpeton thalassium (strain ATCC 35110 / GB-78).